A 1749-amino-acid chain; its full sequence is E3 ubiquitin-protein ligase UBR1 (1749 aa).

At Ala-2 the chain carries N-acetylalanine. The residue at position 21 (Thr-21) is a Phosphothreonine. A UBR-type zinc finger spans residues Gln-97–Pro-168. Zn(2+)-binding residues include Cys-99, Cys-112, Cys-115, Cys-124, Cys-127, His-133, and His-136. An a peptide-binding site is contributed by Phe-148. Cys-149 contributes to the Zn(2+) binding site. Residue Asp-150 participates in a peptide binding. Cys-151 provides a ligand contact to Zn(2+). Residue Asp-153 participates in a peptide binding. 2 residues coordinate Zn(2+): Cys-163 and His-166. A disordered region spans residues Gln-842–Pro-868. Residues Arg-1019–Asn-1054 are UBC2-binding region (U2BR). Zn(2+) is bound by residues Cys-1098, Cys-1101, Cys-1159, His-1161, His-1164, and Cys-1167. The RING-type; atypical zinc-finger motif lies at Cys-1098–Lys-1201. Residue Ser-1179 is modified to Phosphoserine. Zn(2+) is bound by residues Cys-1197, Cys-1200, Cys-1627, Cys-1630, and Cys-1653.

This sequence belongs to the E3 ubiquitin-protein ligase UBR1-like family. As to quaternary structure, interacts with RECQL4. As to expression, broadly expressed, with highest levels in skeletal muscle, kidney and pancreas. Present in acinar cells of the pancreas (at protein level).

Its subcellular location is the cytoplasm. The protein resides in the cytosol. It catalyses the reaction S-ubiquitinyl-[E2 ubiquitin-conjugating enzyme]-L-cysteine + [acceptor protein]-L-lysine = [E2 ubiquitin-conjugating enzyme]-L-cysteine + N(6)-ubiquitinyl-[acceptor protein]-L-lysine.. The protein operates within protein modification; protein ubiquitination. Its activity is regulated as follows. Inhibited by the small-molecule compound RF-C11, which bears two heterovalent ligands: RF-C11 inhibits activity toward both type-1 and type-2 N-degrons. Functionally, E3 ubiquitin-protein ligase which is a component of the N-end rule pathway. Recognizes and binds proteins bearing specific N-terminal residues that are destabilizing according to the N-end rule, leading to their ubiquitination and subsequent degradation. Recognizes both type-1 and type-2 N-degrons, containing positively charged amino acids (Arg, Lys and His) and bulky and hydrophobic amino acids, respectively. Does not ubiquitinate proteins that are acetylated at the N-terminus. In contrast, it strongly binds methylated N-degrons. Binds leucine and is a negative regulator of the leucine-mTOR signaling pathway, thereby controlling cell growth. This chain is E3 ubiquitin-protein ligase UBR1, found in Homo sapiens (Human).